Here is an 880-residue protein sequence, read N- to C-terminus: Tyrosine-protein kinase receptor TYRO3 (880 aa).

A signal peptide spans 1–28; the sequence is MVYPGPPGLIAGLLLAALSLSCVDGAKA. 2 consecutive Ig-like C2-type domains span residues 29–114 and 125–206; these read LGFV…KSVS and PYFT…AIVE. Residues 29-414 are Extracellular-facing; sequence LGFVGHGYNL…QRHPHTRMSW (386 aa). Residues N37 and N49 are each glycosylated (N-linked (GlcNAc...) asparagine). C50 and C103 are disulfide-bonded. N143 carries an N-linked (GlcNAc...) asparagine glycan. C146 and C189 form a disulfide bridge. Fibronectin type-III domains are found at residues 213–306 and 311–401; these read PPFN…TKET and LPQN…SKEE. 4 N-linked (GlcNAc...) asparagine glycosylation sites follow: N216, N279, N351, and N365. Residues 415–435 form a helical membrane-spanning segment; sequence VPMVLGILTALVTVVAMTLIF. Topologically, residues 436–880 are cytoplasmic; that stretch reads LRKGRKETRF…MQEEQVVITL (445 aa). Residues 503–774 form the Protein kinase domain; it reads FTLGRTLGKG…VDLKQRLEAI (272 aa). Residues 509–517 and K535 contribute to the ATP site; that span reads LGKGEFGSV. Residue D640 is the Proton acceptor of the active site. At Y671 the chain carries Phosphotyrosine; by autocatalysis. Positions 846 to 880 are disordered; it reads EWSSSAQNGEARGLLHEEEEEEEEEMQEEQVVITL. A compositionally biased stretch (acidic residues) spans 862-873; sequence EEEEEEEEEMQE.

Belongs to the protein kinase superfamily. Tyr protein kinase family. AXL/UFO subfamily. Post-translationally, tyrosine phosphorylated upon receptor stimulation. Detected in brain, spinal cord, intestine, lung, stomach, ovary, testis, skin and eye.

It is found in the cell membrane. The catalysed reaction is L-tyrosyl-[protein] + ATP = O-phospho-L-tyrosyl-[protein] + ADP + H(+). In terms of biological role, may be involved in cell adhesion processes, particularly in the central nervous system. The polypeptide is Tyrosine-protein kinase receptor TYRO3 (tyro3) (Xenopus laevis (African clawed frog)).